Here is a 246-residue protein sequence, read N- to C-terminus: Probable transcriptional regulatory protein YebC (246 aa).

Residues 1–20 (MAGHSKWANTRHRKAAQDAK) are disordered.

Belongs to the TACO1 family.

It is found in the cytoplasm. This is Probable transcriptional regulatory protein YebC from Shigella dysenteriae serotype 1 (strain Sd197).